The sequence spans 450 residues: Signal recognition particle 54 kDa protein (450 aa).

Residues 107–114, 188–192, and 247–250 each bind GTP; these read GIQGSGKT, DTAGR, and TKLD.

The protein belongs to the GTP-binding SRP family. SRP54 subfamily. In terms of assembly, part of the signal recognition particle protein translocation system, which is composed of SRP and FtsY. Archaeal SRP consists of a 7S RNA molecule of 300 nucleotides and two protein subunits: SRP54 and SRP19.

The protein resides in the cytoplasm. It catalyses the reaction GTP + H2O = GDP + phosphate + H(+). In terms of biological role, involved in targeting and insertion of nascent membrane proteins into the cytoplasmic membrane. Binds to the hydrophobic signal sequence of the ribosome-nascent chain (RNC) as it emerges from the ribosomes. The SRP-RNC complex is then targeted to the cytoplasmic membrane where it interacts with the SRP receptor FtsY. This chain is Signal recognition particle 54 kDa protein, found in Methanococcus maripaludis (strain C5 / ATCC BAA-1333).